A 203-amino-acid chain; its full sequence is MSAIAPGMIFLAYLCGSISSAILVCRIAGLPDPRVSGSGNPGATNVLRIGGKRAAVAVLVFDVLKGMLPVWGAYMLGVTPFWLGLIAIAACVGHIWPVFFHFKGGKGVATAFGAIAPIGWDLTGVMAGTWLLSVLLSGYSSLGAIVSALIAPFYVWWFKPQFTFPVSMLSCLILLRHHDNIQRLWRRQETKIWTKLKKKKAPK.

5 consecutive transmembrane segments (helical) span residues 4–24 (IAPG…AILV), 56–76 (VAVL…AYML), 80–100 (PFWL…PVFF), 112–132 (FGAI…TWLL), and 138–158 (GYSS…VWWF).

It belongs to the PlsY family. Probably interacts with PlsX.

It is found in the cell inner membrane. It carries out the reaction an acyl phosphate + sn-glycerol 3-phosphate = a 1-acyl-sn-glycero-3-phosphate + phosphate. It functions in the pathway lipid metabolism; phospholipid metabolism. In terms of biological role, catalyzes the transfer of an acyl group from acyl-phosphate (acyl-PO(4)) to glycerol-3-phosphate (G3P) to form lysophosphatidic acid (LPA). This enzyme utilizes acyl-phosphate as fatty acyl donor, but not acyl-CoA or acyl-ACP. The chain is Glycerol-3-phosphate acyltransferase from Enterobacter sp. (strain 638).